The sequence spans 128 residues: Translation initiation factor 5A (128 aa).

Lysine 35 carries the post-translational modification Hypusine.

It belongs to the eIF-5A family.

The protein resides in the cytoplasm. In terms of biological role, functions by promoting the formation of the first peptide bond. This Methanosarcina mazei (strain ATCC BAA-159 / DSM 3647 / Goe1 / Go1 / JCM 11833 / OCM 88) (Methanosarcina frisia) protein is Translation initiation factor 5A (eif5a).